Consider the following 363-residue polypeptide: NAD(P)H-quinone oxidoreductase subunit 1, chloroplastic (363 aa).

Helical transmembrane passes span 30–50 (LVPIVTLVLGITIGVLVIVWL), 98–118 (FSIGPSIAVISIFLSYSVIPF), 127–147 (LSIGVFFWIAISSIAPVGLLM), 165–185 (AAQSISYEIPLALCVLSISLL), 203–223 (FWGWNLWRQPIGFIVFLISSL), 248–268 (YSGIKFGLFYIASYLNLLVSS), 300–320 (VFGTLIGIFITLAKTYLFLFI), and 336–356 (LLNLGWKFLLPISLGNLLLTT).

It belongs to the complex I subunit 1 family. NDH is composed of at least 16 different subunits, 5 of which are encoded in the nucleus.

The protein localises to the plastid. It localises to the chloroplast thylakoid membrane. It carries out the reaction a plastoquinone + NADH + (n+1) H(+)(in) = a plastoquinol + NAD(+) + n H(+)(out). The enzyme catalyses a plastoquinone + NADPH + (n+1) H(+)(in) = a plastoquinol + NADP(+) + n H(+)(out). Functionally, NDH shuttles electrons from NAD(P)H:plastoquinone, via FMN and iron-sulfur (Fe-S) centers, to quinones in the photosynthetic chain and possibly in a chloroplast respiratory chain. The immediate electron acceptor for the enzyme in this species is believed to be plastoquinone. Couples the redox reaction to proton translocation, and thus conserves the redox energy in a proton gradient. This Solanum bulbocastanum (Wild potato) protein is NAD(P)H-quinone oxidoreductase subunit 1, chloroplastic.